The following is a 2290-amino-acid chain: MKRYPFKSWIFELREILREIKNSHYFLDSWTRFDSVGSFTHIFFHQERFMKLFDPRIWSILLSRDSQGSTSNRYFTIKGVVLLVVAVLIYRINNRTMVERKNISLMGLLPIPMNFIGLRNDTLEEAFWSSNINRLIASLLYLPKRKKISESCFMDPKESTWVLPITKKRIMPESNWGSRWWRNRIGKKRDSSCKISNETVAGIEISFKEKDIKYLEFLFVSYTDDPIRKDHDWELFDRLSPRKKRNIINLNSGQLFEILVKHSICYLMSVFREKRPIEVKGFFKQQGAEATIQSNDIEHVSHLFSRDQWGISLQNCAQFHMWQFRQDLFVSWGKNPHESDFLRNASRENWIWLDNVWLVNKDRFFSKVRNVSSNMEYDSTRSLFVQVPDSSQWKGSSDQSRDHFDSISNEDSEYHTWINQTEIQQLKERSILWDPSFLQTERTEIESDRFPKCLSGYSSMYRLFTEREKQMNNHLLPEEIEEFLGNPTRSIRSFFSDRWSELHLGSNPTERSTRDQKSLKKQQDVSFVPPRRSENQEMVDIFKIITYLQNIVSIHPISSDPGCDMVPKDEPDMDRSNKISFLNKNPFFDLFHPFHDRNKGGYTLHHDFESESEERFQEIADLFTLSITEPDLVYHKGFAFSIDSYGLDQTKFLNEVFNSRDESKKKSLLVLPPIFDEENESFSRRIRKKSGRISCGNDLEDPKQKIVVFASKNIMEAVNQYRLIRNLIQIQYSTYGYIRNVLNRFFLMNGSDRNFEYGIQRDQIGTDTLNHITIMKYTINQHLSNLKKSQKKWFNPLISRTERSMNRDPNAYRYKWFNGSKNFQEHLEHFVSEQKNRFQVVIDRLRINQYSIDWSEVIDKQDLSKSLRFFLSKSLLFLSKSLLFLSKSLPFFFVSIGNIPIHRSEIHIYELKGPNDQLCNQLLESIGVQIVHLNKLKPFLLDDHDTSQRSKFLINGGTISPFLFNKIPKWMIDSSHTRKNRRKSFDNTDSYFSMISPDRDNWLNPVKPFHRSSLISSFYKAIRFLNNPHPFWFYCNKRFPLYVDVEKARINNYDLTYGQFLNILFIRNKIFSLCVGKKKHVFLERDTISPTESQVSDIFIPNDFPQSGDETYNLYKSFHLPIRSDPFVRRAIYSIADIYGTPLIEEQIVNFERTYCQPLSDMNISDSEGKNLHHQYLSFNSNMGLIHTPCSEKDFPSGRRKKKSIYLKKCVEKWRMYRTFQRDSAFSNLSKWNLFQTYMPWFLTSTGCKYLNFTLLDTFSDPLPILSSSPKFVSIFHDIMHGSDISWPIRQKKWWAILPQRNLISEISSKCLQNLLLSEEMIHRNNESPVPLIWTHLRSPNAREFLYSILFLLLVAGYLVRTHLLFVSRASSELQTELEKIKSLMIPSYMIDLRKLLDRYPTSELNSFWLKNLFLVALEQLGDSLEEIRGYANTLLGGGPAYGEKSIRSKKKYWNINLIDLISIIPNPINRITFSRDTRHLSRTSKEIYSLIRKRKNVNGDWIDDKIESWVANSDSIDDEEREFLVQFCTLATEKRIDQILLSLTHSDHLSKNDSGYQMIEQPGSIYLRYLVDIHQKYLMNYEFNRSCLAERRIFLAHYQTITYSQTSCRANSSHFPSHGKPFSLRLALSPSRGILVIGSIGTGRSYLVKYLATNSYLPFITVFPNKFLDDKPKGYLSDDIDIDDSDAIDDSDDIDDSDDIDDDLDTELLTMYMTPKIDRFDITPQFELAKAMSPCIIWIPNIHDLYVNESNYLSLGLLVNYLSRDCERCSTRKILVIASTHIPQKVDPALIAPNKLNTCIKIRRLLIPQQRKRFFILSYTRGFRLEKKMFHTNGFGSITMGSNARDLVALTNEALSISITQKKSIIDTNTIRAALHRQTWDLRSRVRSVQDHGIFFYQIGRAVAQNVLLSHCPIDPISIYMKKKLCKEGDSYLYKWYFELGTSIKKFTILLYLLSSSAGFVAQDLWSPPGPDEKNGITSYGFVENDSDLVHALLEVEGALVGSSRTEKDCSQFDNDRATLLLRSEPRNQLDMMQNGSCSIVDQRFLYEKDESDFEEGEGALDPQQIEEDLFNHIVWAPRIWRPCGNLFDCIESPNSLGFPYWARSSRGKRIIYHKEDEHQENDSEFLQSGTMQYQTRDRSSKEQGFFRISQFILDPADPFFFLFKDQPFVSVFSRREFFADQEMSKGLITSQTNPPTSLYKRWFIKNTQEKHFQLLIHRQRWLRTNSSLSNRSSRSNTPSESYQYLSNLFLSNGTLLDQMTKTLLRKRWLFPDEMKHLIHVTGERFPIP.

The interval G505–P530 is disordered. Positions R511–Q523 are enriched in basic and acidic residues. G1639–S1646 is a binding site for ATP.

Belongs to the Ycf2 family.

It is found in the plastid. The protein resides in the chloroplast stroma. Probable ATPase of unknown function. Its presence in a non-photosynthetic plant (Epifagus virginiana) and experiments in tobacco indicate that it has an essential function which is probably not related to photosynthesis. This chain is Protein Ycf2, found in Ceratophyllum demersum (Rigid hornwort).